The chain runs to 268 residues: MYVGYVLDKDSPVYPGPARPSSLGLGPPTYAPPGPAPAPPQYPDFAGYTHVEPAPAPPPTWAAPFPAPKDDWAAAYGPGPTASAASPAPLAFGPPPDFSPVPAPPGPGPGILAQSLGAPGAPSSPGAPRRTPYEWMRRSVAAAGGGGSGKTRTKDKYRVVYTDHQRLELEKEFHYSRYITIRRKSELAANLGLTERQVKIWFQNRRAKERKVNKKKQQQQQPLPPTQLPLPLDGTPTPSGPPLGSLCPTNAGLLGTPSPVPVKEEFLP.

The interval 1 to 152 (MYVGYVLDKD…AGGGGSGKTR (152 aa)) is disordered. Pro residues-rich tracts occupy residues 29 to 42 (TYAPPGPAPAPPQY) and 54 to 67 (APAPPPTWAAPFPA). The segment covering 73–91 (AAAYGPGPTASAASPAPLA) has biased composition (low complexity). Residues 92-108 (FGPPPDFSPVPAPPGPG) are compositionally biased toward pro residues. Residues 115–128 (SLGAPGAPSSPGAP) show a composition bias toward low complexity. Residues 154-213 (KDKYRVVYTDHQRLELEKEFHYSRYITIRRKSELAANLGLTERQVKIWFQNRRAKERKVN) constitute a DNA-binding region (homeobox). Residues 157–178 (YRVVYTDHQRLELEKEFHYSRY) are interaction with DNA. The tract at residues 196 to 207 (RQVKIWFQNRRA) is interaction with 5-mCpG DNA. Positions 209–268 (ERKVNKKKQQQQQPLPPTQLPLPLDGTPTPSGPPLGSLCPTNAGLLGTPSPVPVKEEFLP) are disordered. Residues 229–246 (PLPLDGTPTPSGPPLGSL) show a composition bias toward low complexity.

This sequence belongs to the Caudal homeobox family. In terms of tissue distribution, intestinal epithelium.

The protein localises to the nucleus. In terms of biological role, plays a role in transcriptional regulation. Involved in activated KRAS-mediated transcriptional activation of PRKD1 in colorectal cancer (CRC) cells. Binds to the PRKD1 promoter in colorectal cancer (CRC) cells. Could play a role in the terminal differentiation of the intestine. Binds preferentially to methylated DNA. The chain is Homeobox protein CDX-1 (Cdx1) from Mus musculus (Mouse).